The chain runs to 162 residues: Corticoliberin (162 aa).

Positions 1–24 are cleaved as a signal peptide; it reads MKLNFLVTTVALLVAFPPPYECRA. Residues 25–119 constitute a propeptide that is removed on maturation; the sequence is IEGSSNQPAT…ALDSVERERR (95 aa). Position 160 is a phenylalanine amide (phenylalanine 160).

Belongs to the sauvagine/corticotropin-releasing factor/urotensin I family.

It localises to the secreted. Functionally, this hormone from hypothalamus regulates the release of corticotropin from pituitary gland. The chain is Corticoliberin (crh) from Carassius auratus (Goldfish).